The sequence spans 1073 residues: Probable inorganic carbon transporter subunit DabA (1073 aa).

The Zn(2+) site is built by Cys-551, Asp-553, His-742, and Cys-757.

It belongs to the inorganic carbon transporter (TC 9.A.2) DabA family. In terms of assembly, forms a complex with DabB. Zn(2+) is required as a cofactor.

The protein resides in the cell inner membrane. Part of an energy-coupled inorganic carbon pump. The protein is Probable inorganic carbon transporter subunit DabA of Methylococcus capsulatus (strain ATCC 33009 / NCIMB 11132 / Bath).